A 182-amino-acid chain; its full sequence is Ribosome maturation factor RimM (182 aa).

The PRC barrel domain occupies 102 to 182 (EEGDYYWKDL…TIEVDWDPGF (81 aa)).

Belongs to the RimM family. Binds ribosomal protein uS19.

It is found in the cytoplasm. Its function is as follows. An accessory protein needed during the final step in the assembly of 30S ribosomal subunit, possibly for assembly of the head region. Essential for efficient processing of 16S rRNA. May be needed both before and after RbfA during the maturation of 16S rRNA. It has affinity for free ribosomal 30S subunits but not for 70S ribosomes. The protein is Ribosome maturation factor RimM of Klebsiella pneumoniae (strain 342).